The sequence spans 1131 residues: PPi-type phosphoenolpyruvate carboxykinase (1131 aa).

This sequence belongs to the PPi-type phosphoenolpyruvate carboxykinase family. Monomer and trimer; forms heterotrimers with PEPCK2 and PEPCK3.

The catalysed reaction is oxaloacetate + diphosphate = phosphoenolpyruvate + phosphate + CO2. Functionally, inorganic pyrophosphate (PPi)-dependent phosphoenolpyruvate carboxykinase, which regulates the carbon flow of the central metabolism by fixing CO(2) to phosphoenolpyruvate to produce oxaloacetate. Can also produce pyruvate and diphosphate from phosphoenolpyruvate and phosphate. In Propionibacterium freudenreichii subsp. freudenreichii, this protein is PPi-type phosphoenolpyruvate carboxykinase.